We begin with the raw amino-acid sequence, 499 residues long: Cytochrome P450 11B1, mitochondrial (499 aa).

The transit peptide at 1–24 (MALRVTADVWLARPWQCLHRTRAL) directs the protein to the mitochondrion. C446 is a binding site for heme.

It belongs to the cytochrome P450 family. Heme serves as cofactor. In terms of tissue distribution, adrenal zona fasciculata/reticularis.

It localises to the mitochondrion inner membrane. The enzyme catalyses a steroid + 2 reduced [adrenodoxin] + O2 + 2 H(+) = an 11beta-hydroxysteroid + 2 oxidized [adrenodoxin] + H2O. It catalyses the reaction 21-hydroxyprogesterone + 2 reduced [adrenodoxin] + O2 + 2 H(+) = corticosterone + 2 oxidized [adrenodoxin] + H2O. The catalysed reaction is 21-hydroxyprogesterone + 2 reduced [adrenodoxin] + O2 + 2 H(+) = 18-hydroxy-11-deoxycorticosterone + 2 oxidized [adrenodoxin] + H2O. It carries out the reaction 21-hydroxyprogesterone + 2 reduced [adrenodoxin] + O2 + 2 H(+) = 19-hydroxy-11-deoxycorticosterone + 2 oxidized [adrenodoxin] + H2O. The enzyme catalyses 11-deoxycortisol + 2 reduced [adrenodoxin] + O2 + 2 H(+) = cortisol + 2 oxidized [adrenodoxin] + H2O. It catalyses the reaction cortisol + 2 reduced [adrenodoxin] + O2 + 2 H(+) = 18-hydroxycortisol + 2 oxidized [adrenodoxin] + H2O. The catalysed reaction is 11-deoxycortisol + 2 reduced [adrenodoxin] + O2 + 2 H(+) = 18-hydroxy-11-deoxycortisol + 2 oxidized [adrenodoxin] + H2O. Its pathway is steroid biosynthesis; glucocorticoid biosynthesis. It participates in steroid hormone biosynthesis. A cytochrome P450 monooxygenase involved in the biosynthesis of adrenal corticoids. Catalyzes a variety of reactions that are essential for many species, including detoxification, defense, and the formation of endogenous chemicals like steroid hormones. Steroid 11beta, 18- and 19-hydroxylase with preferred regioselectivity at 11beta, then 18, and lastly 19. Catalyzes the hydroxylation of 11-deoxycortisol and 11-deoxycorticosterone (21-hydroxyprogesterone) at 11beta position, yielding cortisol or corticosterone, respectively, but cannot produce aldosterone. Mechanistically, uses molecular oxygen inserting one oxygen atom into a substrate for hydroxylation and reducing the second into a water molecule. Two electrons are provided by NADPH via a two-protein mitochondrial transfer system comprising flavoprotein FDXR (adrenodoxin/ferredoxin reductase) and nonheme iron-sulfur protein FDX1 or FDX2 (adrenodoxin/ferredoxin). Due to its lack of 18-oxidation activity, it is incapable of generating aldosterone. Could also be involved in the androgen metabolic pathway. This chain is Cytochrome P450 11B1, mitochondrial (Cyp11b1), found in Rattus norvegicus (Rat).